The following is a 676-amino-acid chain: Rho guanine nucleotide exchange factor 37 (676 aa).

The interval methionine 1 to lysine 26 is disordered. The DH domain maps to histidine 30–tyrosine 213. The region spanning leucine 254–aspartate 455 is the BAR domain. SH3 domains lie at glycine 506–proline 569 and proline 603–serine 666. Disordered stretches follow at residues histidine 568–threonine 601 and proline 657–serine 676.

In terms of biological role, may act as a guanine nucleotide exchange factor (GEF). In Rattus norvegicus (Rat), this protein is Rho guanine nucleotide exchange factor 37 (Arhgef37).